The chain runs to 358 residues: UDP-N-acetylglucosamine--N-acetylmuramyl-(pentapeptide) pyrophosphoryl-undecaprenol N-acetylglucosamine transferase (358 aa).

UDP-N-acetyl-alpha-D-glucosamine is bound by residues 11 to 13 (TAG), Asn125, Arg162, Ser196, and Gln288.

Belongs to the glycosyltransferase 28 family. MurG subfamily.

It is found in the cell membrane. It catalyses the reaction di-trans,octa-cis-undecaprenyl diphospho-N-acetyl-alpha-D-muramoyl-L-alanyl-D-glutamyl-meso-2,6-diaminopimeloyl-D-alanyl-D-alanine + UDP-N-acetyl-alpha-D-glucosamine = di-trans,octa-cis-undecaprenyl diphospho-[N-acetyl-alpha-D-glucosaminyl-(1-&gt;4)]-N-acetyl-alpha-D-muramoyl-L-alanyl-D-glutamyl-meso-2,6-diaminopimeloyl-D-alanyl-D-alanine + UDP + H(+). It functions in the pathway cell wall biogenesis; peptidoglycan biosynthesis. Functionally, cell wall formation. Catalyzes the transfer of a GlcNAc subunit on undecaprenyl-pyrophosphoryl-MurNAc-pentapeptide (lipid intermediate I) to form undecaprenyl-pyrophosphoryl-MurNAc-(pentapeptide)GlcNAc (lipid intermediate II). In Leifsonia xyli subsp. xyli (strain CTCB07), this protein is UDP-N-acetylglucosamine--N-acetylmuramyl-(pentapeptide) pyrophosphoryl-undecaprenol N-acetylglucosamine transferase.